The sequence spans 468 residues: 3-isopropylmalate dehydratase large subunit (468 aa).

Positions 349, 409, and 412 each coordinate [4Fe-4S] cluster.

The protein belongs to the aconitase/IPM isomerase family. LeuC type 1 subfamily. In terms of assembly, heterodimer of LeuC and LeuD. [4Fe-4S] cluster serves as cofactor.

It catalyses the reaction (2R,3S)-3-isopropylmalate = (2S)-2-isopropylmalate. It functions in the pathway amino-acid biosynthesis; L-leucine biosynthesis; L-leucine from 3-methyl-2-oxobutanoate: step 2/4. Its function is as follows. Catalyzes the isomerization between 2-isopropylmalate and 3-isopropylmalate, via the formation of 2-isopropylmaleate. The polypeptide is 3-isopropylmalate dehydratase large subunit (Shewanella baltica (strain OS185)).